We begin with the raw amino-acid sequence, 452 residues long: Exodeoxyribonuclease 7 large subunit (452 aa).

It belongs to the XseA family. In terms of assembly, heterooligomer composed of large and small subunits.

It is found in the cytoplasm. The catalysed reaction is Exonucleolytic cleavage in either 5'- to 3'- or 3'- to 5'-direction to yield nucleoside 5'-phosphates.. In terms of biological role, bidirectionally degrades single-stranded DNA into large acid-insoluble oligonucleotides, which are then degraded further into small acid-soluble oligonucleotides. The polypeptide is Exodeoxyribonuclease 7 large subunit (Bacillus anthracis (strain A0248)).